The following is a 389-amino-acid chain: Nicotinamide-nucleotide adenylyltransferase (389 aa).

A Nuclear localization signal motif is present at residues 380–383 (KKQK).

Belongs to the eukaryotic NMN adenylyltransferase family. As to expression, abundantly expressed in neuronal and muscle cells. Present at relatively low levels at the neuromuscular junction. Expressed in the eye; present in photoreceptor cells and various neurons in the lamina cortex and medulla cortex and at low levels in the lamina.

It localises to the nucleus. The protein resides in the cytoplasm. The protein localises to the presynaptic active zone. The catalysed reaction is beta-nicotinamide D-ribonucleotide + ATP + H(+) = diphosphate + NAD(+). It carries out the reaction nicotinate beta-D-ribonucleotide + ATP + H(+) = deamido-NAD(+) + diphosphate. It functions in the pathway cofactor biosynthesis; NAD(+) biosynthesis; NAD(+) from nicotinamide D-ribonucleotide: step 1/1. The protein operates within cofactor biosynthesis; NAD(+) biosynthesis; deamido-NAD(+) from nicotinate D-ribonucleotide: step 1/1. In terms of biological role, catalyzes the formation of NAD(+) from nicotinamide mononucleotide (NMN) and ATP. Essential for viability. Stress-response chaperone protein that prevents toxic aggregation of proteins and promotes proteasome-mediated degradation of misfolded proteins; this is independent of its NAD(+) synthesis activity. Neuroprotective in response to toxic protein aggregation, for example by overexpressed Atx-1/ataxin-1. Required for maintenance and integrity of mature neurons, protecting them from neuronal activity-induced neurodegeneration. Required for the maintenance of axonal and dendritic integrity in both central and peripheral neurons. Chaperone function and neuroprotective roles are largely independent of NAD(+) synthesis activity. Its function is as follows. Catalyzes the formation of NAD(+) from nicotinamide mononucleotide (NMN) and ATP. Has, or stimulates, chaperone holdase activity but not refoldase activity. Does not have neuroprotective properties and may stimulate apoptosis and neurodegeneration in response to toxic protein aggregates. Functionally, catalyzes the formation of NAD(+) from nicotinamide mononucleotide (NMN) and ATP. Has, or stimulates, chaperone holdase and refoldase activity. Neuroprotective and reduces the toxic load of protein aggregates, preventing apoptosis and neurodegeneration. Promotes clearance of nuclear misfolded protein aggregates. The chain is Nicotinamide-nucleotide adenylyltransferase from Drosophila melanogaster (Fruit fly).